The sequence spans 209 residues: Orotate phosphoribosyltransferase (209 aa).

Residues R96, K100, H102, and 122–130 (EDLISTGGS) contribute to the 5-phospho-alpha-D-ribose 1-diphosphate site. S126 contacts orotate.

The protein belongs to the purine/pyrimidine phosphoribosyltransferase family. PyrE subfamily. In terms of assembly, homodimer. Requires Mg(2+) as cofactor.

It catalyses the reaction orotidine 5'-phosphate + diphosphate = orotate + 5-phospho-alpha-D-ribose 1-diphosphate. Its pathway is pyrimidine metabolism; UMP biosynthesis via de novo pathway; UMP from orotate: step 1/2. Functionally, catalyzes the transfer of a ribosyl phosphate group from 5-phosphoribose 1-diphosphate to orotate, leading to the formation of orotidine monophosphate (OMP). This Streptococcus mutans serotype c (strain ATCC 700610 / UA159) protein is Orotate phosphoribosyltransferase.